A 187-amino-acid chain; its full sequence is Interferon beta (187 aa).

An N-terminal signal peptide occupies residues 1 to 21 (MTSRSLLPFVLSLLLPRIIMA). Residue tyrosine 24 is modified to Phosphotyrosine. The cysteines at positions 53 and 162 are disulfide-linked. 4 N-linked (GlcNAc...) asparagine glycosylation sites follow: asparagine 76, asparagine 95, asparagine 132, and asparagine 158.

The protein belongs to the alpha/beta interferon family. In terms of assembly, monomer.

The protein resides in the secreted. Its function is as follows. Type I interferon cytokine that plays a key role in the innate immune response to infection, developing tumors and other inflammatory stimuli. Signals via binding to high-affinity (IFNAR2) and low-affinity (IFNAR1) heterodimeric receptor, activating the canonical Jak-STAT signaling pathway resulting in transcriptional activation or repression of interferon-regulated genes that encode the effectors of the interferon response, such as antiviral proteins, regulators of cell proliferation and differentiation, and immunoregulatory proteins. Signals mostly via binding to a IFNAR1-IFNAR2 heterodimeric receptor, but can also function with IFNAR1 alone and independently of Jak-STAT pathways. Elicits a wide variety of responses, including antiviral and antibacterial activities, and can regulate the development of B-cells, myelopoiesis and lipopolysaccharide (LPS)-inducible production of tumor necrosis factor. Plays a role in neuronal homeostasis by regulating dopamine turnover and protecting dopaminergic neurons: acts by promoting neuronal autophagy and alpha-synuclein clearance, thereby preventing dopaminergic neuron loss. IFNB1 is more potent than interferon-alpha (IFN-alpha) in inducing the apoptotic and antiproliferative pathways required for control of tumor cell growth. The chain is Interferon beta (IFNB1) from Tachyglossus aculeatus aculeatus (Southeast Australian short-beaked echidna).